The following is a 689-amino-acid chain: uncharacterized protein (689 aa).

The protein resides in the mitochondrion. This is an uncharacterized protein from Schizosaccharomyces pombe (strain 972 / ATCC 24843) (Fission yeast).